A 74-amino-acid chain; its full sequence is Omega-conotoxin-like PuIIA (74 aa).

Positions 1 to 22 (MKLTCVVIVAVLFLTACQLITA) are cleaved as a signal peptide. The propeptide occupies 23–46 (ETYSRGEQKHRALSSTDKNSKLTR). Cystine bridges form between C48-C62, C55-C66, and C61-C73.

The protein belongs to the conotoxin O1 superfamily. As to expression, expressed by the venom duct.

The protein resides in the secreted. In terms of biological role, omega-conotoxins act at presynaptic membranes, they bind and block voltage-gated calcium channels (Cav). This Conus pulicarius (Flea-bitten cone) protein is Omega-conotoxin-like PuIIA.